Reading from the N-terminus, the 216-residue chain is UPF0301 protein BBta_6966 (216 aa).

It belongs to the UPF0301 (AlgH) family.

This Bradyrhizobium sp. (strain BTAi1 / ATCC BAA-1182) protein is UPF0301 protein BBta_6966.